Reading from the N-terminus, the 354-residue chain is S-adenosylmethionine:tRNA ribosyltransferase-isomerase (354 aa).

The protein belongs to the QueA family. As to quaternary structure, monomer.

The protein resides in the cytoplasm. The catalysed reaction is 7-aminomethyl-7-carbaguanosine(34) in tRNA + S-adenosyl-L-methionine = epoxyqueuosine(34) in tRNA + adenine + L-methionine + 2 H(+). Its pathway is tRNA modification; tRNA-queuosine biosynthesis. Its function is as follows. Transfers and isomerizes the ribose moiety from AdoMet to the 7-aminomethyl group of 7-deazaguanine (preQ1-tRNA) to give epoxyqueuosine (oQ-tRNA). This Salmonella paratyphi C (strain RKS4594) protein is S-adenosylmethionine:tRNA ribosyltransferase-isomerase.